A 634-amino-acid polypeptide reads, in one-letter code: MKISIVIPVYNSEDLISECLDSLVNQTMPKEDYEIICVDDKSTDSSLDILNQYKKKYENVVVIERTVNSGGPGAPRNDAIKIAKGEYILFVDSDDYIGSEALLRWYNFSKENQSDITLGKLKGINGRGVPKSMFKETNPDVDLVDSKIVFTLGPQKLFKASLLKENKITFPTHIKAAEDQVFTMNAYLKAKKISVSADYDYYYLVKRDGEHMSVAYVPPENFYGAMEDIISAIKASDLEEARKIKLMAVFLNRHFDFSRTKNVTIKMKTDEERAEWFRYLSSFIHAVPEEADQFVLPHIKLRLLFIRNNDLRGLTQYEREEQDIKKFCTVNNGELIARYPSLERYSISEELLKVNYKNKLEHYLQNIEFSDHSLSIQGTITHKLLDDETNKNQSLTGVFVHRDTKAEKYIAPASYDNSTFTFECKFDELASAEEDLGVWDFFIESSIDGYKLRARIGNKRAAYKYSTKTMYLGHNALFVYSARPYFTMNYDNLSIDIKKHAYTEAELSYETESKDLSFIFKDKQIYLPNHSKIIVNTGQSEISLPVKRIDLEPNCTKLTVNVQSLLEQLAHVKKERLIEFAINTSQNKISAKVDNQAIILDTKSVERKSMLFFNKMVEVQYKLLTSKSKFYFQY.

This sequence belongs to the glycosyltransferase 2 family.

It carries out the reaction 4-O-[(D-ribitylphospho)(n)-D-ribitylphospho-(2R)-glycerylphospho]-N-acetyl-beta-D-mannosaminyl-(1-&gt;4)-N-acetyl-alpha-D-glucosaminyl di-trans,octa-cis-undecaprenyl diphosphate + n UDP-alpha-D-glucose = 4-O-[(2-beta-D-glucosyl-D-ribitylphospho)(n)-D-ribitylphospho-(2R)-glycerylphospho]-N-acetyl-beta-D-mannosaminyl-(1-&gt;4)-N-acetyl-alpha-D-glucosaminyl di-trans,octa-cis-undecaprenyl diphosphate + n UDP + n H(+). The protein operates within cell wall biogenesis; poly(ribitol phosphate) teichoic acid biosynthesis. Functionally, attaches glucose residues to poly(RboP)-wall teichoic acids (WTAs). In Bacillus spizizenii (strain ATCC 23059 / NRRL B-14472 / W23) (Bacillus subtilis subsp. spizizenii), this protein is Poly(ribitol-phosphate) beta-glucosyltransferase.